A 127-amino-acid polypeptide reads, in one-letter code: Large ribosomal subunit protein bL12 (127 aa).

It belongs to the bacterial ribosomal protein bL12 family. As to quaternary structure, homodimer. Part of the ribosomal stalk of the 50S ribosomal subunit. Forms a multimeric L10(L12)X complex, where L10 forms an elongated spine to which 2 to 4 L12 dimers bind in a sequential fashion. Binds GTP-bound translation factors.

Functionally, forms part of the ribosomal stalk which helps the ribosome interact with GTP-bound translation factors. Is thus essential for accurate translation. The protein is Large ribosomal subunit protein bL12 of Clavibacter michiganensis subsp. michiganensis (strain NCPPB 382).